We begin with the raw amino-acid sequence, 130 residues long: Fluoride-specific ion channel FluC 2 (130 aa).

4 helical membrane passes run 4-24, 38-58, 72-92, and 103-123; these read GLST…GAIC, NLWG…FFLA, LYLL…SLIL, and WMEL…FISL. Na(+) is bound by residues glycine 82 and serine 85.

This sequence belongs to the fluoride channel Fluc/FEX (TC 1.A.43) family.

The protein resides in the cell inner membrane. The catalysed reaction is fluoride(in) = fluoride(out). Its activity is regulated as follows. Na(+) is not transported, but it plays an essential structural role and its presence is essential for fluoride channel function. Functionally, fluoride-specific ion channel. Important for reducing fluoride concentration in the cell, thus reducing its toxicity. The protein is Fluoride-specific ion channel FluC 2 of Prochlorococcus marinus (strain SARG / CCMP1375 / SS120).